A 459-amino-acid chain; its full sequence is Ribulose bisphosphate carboxylase large chain (459 aa).

Position 4 is an N6,N6,N6-trimethyllysine (Lys-4). Positions 113 and 163 each coordinate substrate. Residue Lys-165 is the Proton acceptor of the active site. A substrate-binding site is contributed by Lys-167. The Mg(2+) site is built by Lys-191, Asp-193, and Glu-194. Lys-191 carries the post-translational modification N6-carboxylysine. His-284 serves as the catalytic Proton acceptor. The substrate site is built by Arg-285, His-317, and Ser-369.

Belongs to the RuBisCO large chain family. Type I subfamily. In terms of assembly, heterohexadecamer of 8 large chains and 8 small chains; disulfide-linked. The disulfide link is formed within the large subunit homodimers. Mg(2+) is required as a cofactor. The disulfide bond which can form in the large chain dimeric partners within the hexadecamer appears to be associated with oxidative stress and protein turnover.

The protein resides in the plastid. Its subcellular location is the chloroplast. The catalysed reaction is 2 (2R)-3-phosphoglycerate + 2 H(+) = D-ribulose 1,5-bisphosphate + CO2 + H2O. It carries out the reaction D-ribulose 1,5-bisphosphate + O2 = 2-phosphoglycolate + (2R)-3-phosphoglycerate + 2 H(+). Its function is as follows. RuBisCO catalyzes two reactions: the carboxylation of D-ribulose 1,5-bisphosphate, the primary event in carbon dioxide fixation, as well as the oxidative fragmentation of the pentose substrate in the photorespiration process. Both reactions occur simultaneously and in competition at the same active site. This chain is Ribulose bisphosphate carboxylase large chain, found in Morus alba (White mulberry).